Consider the following 247-residue polypeptide: UPF0309 protein LMOf2365_2617 (247 aa).

The 184-residue stretch at valine 31–proline 214 folds into the SIS domain.

Belongs to the UPF0309 family.

The protein is UPF0309 protein LMOf2365_2617 of Listeria monocytogenes serotype 4b (strain F2365).